Reading from the N-terminus, the 331-residue chain is Rho GTPase-activating protein 5 (331 aa).

The CRIB domain maps to 3–16 (IGGPTNIRHVAHVT). In terms of domain architecture, Rho-GAP spans 48-225 (VSTESMQLSY…LLKSLTEKTV (178 aa)). Basic and acidic residues predominate over residues 227-251 (EREASSSVVDRRCSKEAEDGEKEKD). The tract at residues 227–331 (EREASSSVVD…VQPPICSSNP (105 aa)) is disordered. Positions 252 to 277 (NEEEEEDEEEEEEEEDEDEDEEEEGD) are enriched in acidic residues.

In terms of tissue distribution, expressed in differentiating xylem cells.

Its subcellular location is the cell membrane. Acts as a GTPase activator for the Rac-type GTPase by converting it to an inactive GDP-bound state. This is Rho GTPase-activating protein 5 (ROPGAP5) from Arabidopsis thaliana (Mouse-ear cress).